The following is a 189-amino-acid chain: Apolipoprotein D (189 aa).

The first 20 residues, 1-20, serve as a signal peptide directing secretion; the sequence is MGMMLLLLSMLAGLVAEAEG. Glutamine 21 carries the pyrrolidone carboxylic acid modification. Cystine bridges form between cysteine 28/cysteine 134 and cysteine 61/cysteine 185. 2 N-linked (GlcNAc...) asparagine glycosylation sites follow: asparagine 65 and asparagine 98.

Belongs to the calycin superfamily. Lipocalin family. As to quaternary structure, homodimer.

Its subcellular location is the secreted. APOD occurs in the macromolecular complex with lecithin-transport and binding of bilin. Appears to be able to transport a variety of ligands in a number of different contexts. This Cavia porcellus (Guinea pig) protein is Apolipoprotein D (APOD).